The sequence spans 265 residues: Nitrogenase iron protein 2 (265 aa).

G8–S15 lines the ATP pocket. Position 91 (C91) interacts with [4Fe-4S] cluster. R94 carries the post-translational modification ADP-ribosylarginine; by dinitrogenase reductase ADP-ribosyltransferase. C126 serves as a coordination point for [4Fe-4S] cluster.

Belongs to the NifH/BchL/ChlL family. As to quaternary structure, homodimer. It depends on [4Fe-4S] cluster as a cofactor. In terms of processing, the reversible ADP-ribosylation of Arg-94 inactivates the nitrogenase reductase and regulates nitrogenase activity.

The enzyme catalyses N2 + 8 reduced [2Fe-2S]-[ferredoxin] + 16 ATP + 16 H2O = H2 + 8 oxidized [2Fe-2S]-[ferredoxin] + 2 NH4(+) + 16 ADP + 16 phosphate + 6 H(+). In terms of biological role, the key enzymatic reactions in nitrogen fixation are catalyzed by the nitrogenase complex, which has 2 components: the iron protein and the molybdenum-iron protein. In Methanothermobacter thermautotrophicus (strain ATCC 29096 / DSM 1053 / JCM 10044 / NBRC 100330 / Delta H) (Methanobacterium thermoautotrophicum), this protein is Nitrogenase iron protein 2 (nifH2).